The chain runs to 318 residues: NAC domain-containing protein 68 (318 aa).

The region spanning 21–175 is the NAC domain; it reads LPPGFRFHPT…EWVLCRLYNK (155 aa).

As to expression, expressed in stems, leaf blades and callus. Weakly expressed in developing flowers.

It localises to the nucleus. Probable transcription factor involved in stress response. The chain is NAC domain-containing protein 68 from Oryza sativa subsp. japonica (Rice).